A 347-amino-acid chain; its full sequence is Anthranilate phosphoribosyltransferase (347 aa).

5-phospho-alpha-D-ribose 1-diphosphate is bound by residues Gly-88, 91–92, Thr-96, 98–101, 116–124, and Ser-128; these read GD, NIST, and KHGNRSVSS. Gly-88 serves as a coordination point for anthranilate. Ser-100 is a binding site for Mg(2+). Residue Asn-119 participates in anthranilate binding. Arg-174 serves as a coordination point for anthranilate. 2 residues coordinate Mg(2+): Asp-232 and Glu-233.

This sequence belongs to the anthranilate phosphoribosyltransferase family. As to quaternary structure, homodimer. Requires Mg(2+) as cofactor.

It carries out the reaction N-(5-phospho-beta-D-ribosyl)anthranilate + diphosphate = 5-phospho-alpha-D-ribose 1-diphosphate + anthranilate. It participates in amino-acid biosynthesis; L-tryptophan biosynthesis; L-tryptophan from chorismate: step 2/5. Its function is as follows. Catalyzes the transfer of the phosphoribosyl group of 5-phosphorylribose-1-pyrophosphate (PRPP) to anthranilate to yield N-(5'-phosphoribosyl)-anthranilate (PRA). The polypeptide is Anthranilate phosphoribosyltransferase (Shewanella sp. (strain ANA-3)).